A 1810-amino-acid chain; its full sequence is Trinucleotide repeat-containing gene 6B protein (1810 aa).

Over residues 1–22 (MQTNEGEVEEESSSQVEQEDFV) the composition is skewed to acidic residues. Disordered regions lie at residues 1–221 (MQTN…PNPI), 235–1080 (EEWP…KKQM), 1141–1196 (MRKD…SSPG), and 1293–1329 (ALQQQQQQQQQQQRQPSMKHSPSHPVGPKPHLDNMVP). The stretch at 33–75 (GEESKQEKEQEREEQLMEDKKRKKEDKKKKEATQKVTEQKTKV) forms a coiled coil. Composition is skewed to basic and acidic residues over residues 34 to 52 (EESKQEKEQEREEQLMEDK) and 60 to 77 (KKKEATQKVTEQKTKVPE). Residues 37–1028 (KQEKEQEREE…AMKPNSKSMQ (992 aa)) form an interaction with argonaute proteins region. Over residues 88 to 106 (AASPIGSSPSPPVNGGNNA) the composition is skewed to low complexity. Residues 123–139 (MPREVPPRFRCQQDHKV) show a composition bias toward basic and acidic residues. Residues 165–174 (APGANPNNNA) are compositionally biased toward low complexity. Over residues 180 to 190 (LLQSESGTAPE) the composition is skewed to polar residues. 2 stretches are compositionally biased toward low complexity: residues 207-220 (GPGASSNSGASPNP) and 248-260 (SSENTTDNNSASN). 2 stretches are compositionally biased toward polar residues: residues 261 to 290 (PGSEKSSLPGSTTSNKGKGSQCQAASSGNE) and 306 to 327 (QPPNSTSDSNNGLGNWRSTSGQ). 3 stretches are compositionally biased toward low complexity: residues 335 to 346 (GFSNFNPNSNPS), 363 to 380 (ETESSSSSAQVSTVGQAS), and 416 to 425 (NSLNLSSPNP). The span at 438–451 (GNTSRSTDAPSQST) shows a compositional bias: polar residues. Over residues 475 to 486 (SGQSNSGNNGNN) the composition is skewed to low complexity. Polar residues-rich tracts occupy residues 504–528 (GSKSDSWDNNNRSTGGSWNFGPQDN), 564–575 (GPNQPNSSTGAW), 611–623 (TGSNHKAGSSDSH), and 655–667 (LSNTGWGQTQIKQ). Over residues 675 to 688 (EVPRPEGKSDKGTE) the composition is skewed to basic and acidic residues. Polar residues-rich tracts occupy residues 774–783 (QPNQGWTSGK) and 793–804 (VKNNNWESSANK). A compositionally biased stretch (gly residues) spans 809–824 (WGEGGQNEIGTWGNGG). Polar residues predominate over residues 846–857 (TGRQPNSWNKQH). S913 is modified (phosphoserine). Polar residues-rich tracts occupy residues 934–950 (NSYNYKNVNLWDKNSQG), 964–975 (TGKSASVWSKST), 1004–1027 (ASTTGWGNTPANAPNAMKPNSKSM), 1057–1072 (TAGSQGSTSSHNSASW), and 1175–1195 (GNSTAQSRGLHTPVQPLSSSP). The segment at 1191–1700 (LSSSPGLRAQ…LAEFATEDEV (510 aa)) is silencing domain; interaction with CNOT1 and PAN3. The span at 1295-1307 (QQQQQQQQQQQRQ) shows a compositional bias: low complexity. S1409 carries the phosphoserine modification. T1426 is subject to Phosphothreonine. S1438 is subject to Phosphoserine. The residue at position 1441 (T1441) is a Phosphothreonine. The segment at 1449–1467 (SNASWPPEFQPGVPWKGIQ) is PABPC1-interacting motif-2 (PAM2). The disordered stretch occupies residues 1568 to 1619 (SSRNTTPLTRPPPGLTNPKPASPWSSTAPRSVRGWGTQDSRIASASTWSDGG). Positions 1604-1617 (TQDSRIASASTWSD) are enriched in polar residues. The region spanning 1625–1697 (YWLVLHNLTP…TTILAEFATE (73 aa)) is the RRM domain. 2 disordered regions span residues 1706–1740 (QAQPPTPAATPSAPATGWQSLETSQNQADPVGPAL) and 1786–1810 (EDPHRMGSPAPLLPGDLLGGGSDSI). Over residues 1722 to 1733 (GWQSLETSQNQA) the composition is skewed to polar residues. Over residues 1792-1801 (GSPAPLLPGD) the composition is skewed to low complexity. Phosphoserine is present on residues S1793 and S1809.

Belongs to the GW182 family. As to quaternary structure, interacts with AGO1, AGO2, AGO3 and AGO4. Interacts with CNOT1; the interaction mediates the association with the CCR4-NOT complex. Interacts with PAN3; the interaction mediates the association with the PAN complex. Interacts with MOV10; the interaction is direct and RNA-dependent.

Its subcellular location is the cytoplasm. It is found in the P-body. In terms of biological role, plays a role in RNA-mediated gene silencing by both micro-RNAs (miRNAs) and short interfering RNAs (siRNAs). Required for miRNA-dependent translational repression and siRNA-dependent endonucleolytic cleavage of complementary mRNAs by argonaute family proteins. As scaffolding protein associates with argonaute proteins bound to partially complementary mRNAs and simultaneously can recruit CCR4-NOT and PAN deadenylase complexes. The sequence is that of Trinucleotide repeat-containing gene 6B protein (Tnrc6b) from Mus musculus (Mouse).